The chain runs to 296 residues: L-ornithine N(alpha)-acyltransferase (296 aa).

It belongs to the acetyltransferase family. OlsB subfamily.

It carries out the reaction a (3R)-hydroxyacyl-[ACP] + L-ornithine = a lyso-ornithine lipid + holo-[ACP] + H(+). Its pathway is lipid metabolism. Functionally, catalyzes the first step in the biosynthesis of ornithine lipids, which are phosphorus-free membrane lipids. Catalyzes the 3-hydroxyacyl-acyl carrier protein-dependent acylation of ornithine to form lyso-ornithine lipid (LOL). The protein is L-ornithine N(alpha)-acyltransferase of Rhizobium meliloti (strain 1021) (Ensifer meliloti).